Consider the following 350-residue polypeptide: Biotin synthase (350 aa).

The 228-residue stretch at 41–268 (NEVQVSRLLS…KSRVRLSAGR (228 aa)) folds into the Radical SAM core domain. [4Fe-4S] cluster contacts are provided by Cys56, Cys60, and Cys63. [2Fe-2S] cluster contacts are provided by Cys100, Cys131, Cys191, and Arg263.

This sequence belongs to the radical SAM superfamily. Biotin synthase family. Homodimer. It depends on [4Fe-4S] cluster as a cofactor. Requires [2Fe-2S] cluster as cofactor.

The catalysed reaction is (4R,5S)-dethiobiotin + (sulfur carrier)-SH + 2 reduced [2Fe-2S]-[ferredoxin] + 2 S-adenosyl-L-methionine = (sulfur carrier)-H + biotin + 2 5'-deoxyadenosine + 2 L-methionine + 2 oxidized [2Fe-2S]-[ferredoxin]. The protein operates within cofactor biosynthesis; biotin biosynthesis; biotin from 7,8-diaminononanoate: step 2/2. Functionally, catalyzes the conversion of dethiobiotin (DTB) to biotin by the insertion of a sulfur atom into dethiobiotin via a radical-based mechanism. In Shewanella pealeana (strain ATCC 700345 / ANG-SQ1), this protein is Biotin synthase.